The chain runs to 698 residues: Probable metal-nicotianamine transporter YSL17 (698 aa).

Positions 1 to 36 (MAEEARGGQRVVVDDDREDASSVASSTERAFEGEPL) are disordered. Helical transmembrane passes span 43–63 (VTARSAAVSGVLGAVVSVVAM), 67–87 (LTSGLLPSLGVPAGLLGFFLA), 114–134 (IAVVSCSTIAFSGGFGTYILG), 157–177 (IGRVIAFLFLVNFSGLFIIVP), 216–236 (VVTLFKSLGATVLWPIFQWFF), 277–297 (MITASMLAGSIVSWGILWPYI), 322–342 (VFVGVSMILADGLFTILSALV), 395–415 (WVAVASYAALAALSVVAVPLL), 424–444 (VAAAYVAAPVFAFCNAYGVGV), 463–483 (SWVGMDGGGVVAGLAACGIIV), 511–531 (VGQVAGTALGCVVNPAIFWVF), 567–587 (LPDHSVLLCKLFFAMALALSA), 607–627 (IGVAVAFFVPPRIPVGMAVGC), and 644–664 (LLLPAVASGLICGDGLGSLAS).

It belongs to the YSL (TC 2.A.67.2) family. Expressed at low levels in roots.

It is found in the membrane. In terms of biological role, may be involved in the transport of nicotianamine-chelated metals. The sequence is that of Probable metal-nicotianamine transporter YSL17 (YSL17) from Oryza sativa subsp. japonica (Rice).